The following is a 225-amino-acid chain: MTKFSLHKEGLLTIGFTLACTAVAFFFVPALGLCGICVAALVTYFFRDPQRAIAISKDFVLSPADGLICKIENALPPQSSELVEEMQKISVYLSPLNVHVNRIPVDGIVRKLHYVPGKNLRADYDSSEDENERQESTIEMADGRNVVVVQQTGFLARRVVCDLRKDQQVSAGKRFGIIKFGSRVTVYIPKDMPLLVSEGQTVVAGETILALLSETASLVTERFLD.

Serine 182 acts as the Schiff-base intermediate with substrate; via pyruvic acid in catalysis. Residue serine 182 is modified to Pyruvic acid (Ser); by autocatalysis.

The protein belongs to the phosphatidylserine decarboxylase family. PSD-A subfamily. Heterodimer of a large membrane-associated beta subunit and a small pyruvoyl-containing alpha subunit. The cofactor is pyruvate. Post-translationally, is synthesized initially as an inactive proenzyme. Formation of the active enzyme involves a self-maturation process in which the active site pyruvoyl group is generated from an internal serine residue via an autocatalytic post-translational modification. Two non-identical subunits are generated from the proenzyme in this reaction, and the pyruvate is formed at the N-terminus of the alpha chain, which is derived from the carboxyl end of the proenzyme. The post-translation cleavage follows an unusual pathway, termed non-hydrolytic serinolysis, in which the side chain hydroxyl group of the serine supplies its oxygen atom to form the C-terminus of the beta chain, while the remainder of the serine residue undergoes an oxidative deamination to produce ammonia and the pyruvoyl prosthetic group on the alpha chain.

Its subcellular location is the cell membrane. It carries out the reaction a 1,2-diacyl-sn-glycero-3-phospho-L-serine + H(+) = a 1,2-diacyl-sn-glycero-3-phosphoethanolamine + CO2. The protein operates within phospholipid metabolism; phosphatidylethanolamine biosynthesis; phosphatidylethanolamine from CDP-diacylglycerol: step 2/2. In terms of biological role, catalyzes the formation of phosphatidylethanolamine (PtdEtn) from phosphatidylserine (PtdSer). In Neorickettsia sennetsu (strain ATCC VR-367 / Miyayama) (Ehrlichia sennetsu), this protein is Phosphatidylserine decarboxylase proenzyme.